The chain runs to 224 residues: Glycerol-3-phosphate acyltransferase (224 aa).

Helical transmembrane passes span 14–34, 70–90, 99–119, 129–149, 162–182, and 185–205; these read INMI…GWLL, YLSI…VLGA, TQWS…YLGF, IGSV…IWGI, LIGV…LPLP, and ISII…LFIF.

This sequence belongs to the PlsY family. Probably interacts with PlsX.

The protein localises to the cell inner membrane. It carries out the reaction an acyl phosphate + sn-glycerol 3-phosphate = a 1-acyl-sn-glycero-3-phosphate + phosphate. Its pathway is lipid metabolism; phospholipid metabolism. Functionally, catalyzes the transfer of an acyl group from acyl-phosphate (acyl-PO(4)) to glycerol-3-phosphate (G3P) to form lysophosphatidic acid (LPA). This enzyme utilizes acyl-phosphate as fatty acyl donor, but not acyl-CoA or acyl-ACP. The protein is Glycerol-3-phosphate acyltransferase of Helicobacter hepaticus (strain ATCC 51449 / 3B1).